The following is a 423-amino-acid chain: UPF0229 protein VV2350 (423 aa).

The interval 81–111 (QFITGDKIERPKGGQGGGGAGDGDASADGEG) is disordered. Gly residues predominate over residues 93–102 (GGQGGGGAGD).

It belongs to the UPF0229 family.

The sequence is that of UPF0229 protein VV2350 from Vibrio vulnificus (strain YJ016).